Here is a 345-residue protein sequence, read N- to C-terminus: Uroporphyrinogen decarboxylase (345 aa).

Residues 27-31, Phe46, Asp76, Tyr152, Ser207, and His321 each bind substrate; that span reads RQAGR.

The protein belongs to the uroporphyrinogen decarboxylase family. As to quaternary structure, homodimer.

The protein resides in the cytoplasm. It catalyses the reaction uroporphyrinogen III + 4 H(+) = coproporphyrinogen III + 4 CO2. It participates in porphyrin-containing compound metabolism; protoporphyrin-IX biosynthesis; coproporphyrinogen-III from 5-aminolevulinate: step 4/4. Its function is as follows. Catalyzes the decarboxylation of four acetate groups of uroporphyrinogen-III to yield coproporphyrinogen-III. This Staphylococcus aureus (strain USA300 / TCH1516) protein is Uroporphyrinogen decarboxylase.